We begin with the raw amino-acid sequence, 346 residues long: MVSSNFYKNLGPRKLTAIVDFLHDIIEPTKIYEDIDIYDIKILQEASPNDISFLSNPKYSEFLKTTKAAACIVPKNFTEEVNQNTVLIHAENSYFAYSKLIDFFYAPIKSYSTKIMKSAIIADSATIGKNCYIGHNVVIEDDVIIGDNSIIDAGTFIGRGVNIGKNARIEQHVSINYAIIGDDVVILVGAKIGQDGFGFSTEKGVHHKIFHIGIVKIGNNVEIGSNTTIDRGALQDTIIEDLCRIDNLVQIGHGVKIGKGSIIVAQAGIAGSSAIGKYCALGGQVGIAGHLNIGDGTQVAAQGGVAQNIEEGKIVGGSPAVPIMDWHRQSIIMKQLVKTSNSKLKK.

Residue H253 is the Proton acceptor of the active site.

It belongs to the transferase hexapeptide repeat family. LpxD subfamily. Homotrimer.

The enzyme catalyses a UDP-3-O-[(3R)-3-hydroxyacyl]-alpha-D-glucosamine + a (3R)-hydroxyacyl-[ACP] = a UDP-2-N,3-O-bis[(3R)-3-hydroxyacyl]-alpha-D-glucosamine + holo-[ACP] + H(+). The protein operates within bacterial outer membrane biogenesis; LPS lipid A biosynthesis. Catalyzes the N-acylation of UDP-3-O-acylglucosamine using 3-hydroxyacyl-ACP as the acyl donor. Is involved in the biosynthesis of lipid A, a phosphorylated glycolipid that anchors the lipopolysaccharide to the outer membrane of the cell. The protein is UDP-3-O-acylglucosamine N-acyltransferase of Rickettsia prowazekii (strain Madrid E).